The following is a 212-amino-acid chain: ATP-dependent dethiobiotin synthetase BioD (212 aa).

13–18 (GIGKTV) contributes to the ATP binding site. T17 contacts Mg(2+). K33 is an active-site residue. S37 provides a ligand contact to substrate. Position 100 (E100) interacts with Mg(2+). Residues 100-103 (EGAG), 160-161 (IS), and 184-186 (PLL) contribute to the ATP site.

The protein belongs to the dethiobiotin synthetase family. As to quaternary structure, homodimer. The cofactor is Mg(2+).

Its subcellular location is the cytoplasm. It carries out the reaction (7R,8S)-7,8-diammoniononanoate + CO2 + ATP = (4R,5S)-dethiobiotin + ADP + phosphate + 3 H(+). Its pathway is cofactor biosynthesis; biotin biosynthesis; biotin from 7,8-diaminononanoate: step 1/2. Functionally, catalyzes a mechanistically unusual reaction, the ATP-dependent insertion of CO2 between the N7 and N8 nitrogen atoms of 7,8-diaminopelargonic acid (DAPA, also called 7,8-diammoniononanoate) to form a ureido ring. The chain is ATP-dependent dethiobiotin synthetase BioD from Brucella abortus (strain S19).